The primary structure comprises 289 residues: 4-diphosphocytidyl-2-C-methyl-D-erythritol kinase (289 aa).

Lys10 is an active-site residue. ATP is bound at residue 94–104 (PVAAGLAGGSS). The active site involves Asp136.

Belongs to the GHMP kinase family. IspE subfamily.

It catalyses the reaction 4-CDP-2-C-methyl-D-erythritol + ATP = 4-CDP-2-C-methyl-D-erythritol 2-phosphate + ADP + H(+). It participates in isoprenoid biosynthesis; isopentenyl diphosphate biosynthesis via DXP pathway; isopentenyl diphosphate from 1-deoxy-D-xylulose 5-phosphate: step 3/6. Functionally, catalyzes the phosphorylation of the position 2 hydroxy group of 4-diphosphocytidyl-2C-methyl-D-erythritol. In Bacillus pumilus (strain SAFR-032), this protein is 4-diphosphocytidyl-2-C-methyl-D-erythritol kinase.